The sequence spans 362 residues: Phospho-N-acetylmuramoyl-pentapeptide-transferase (362 aa).

10 helical membrane-spanning segments follow: residues 27 to 47, 73 to 93, 97 to 117, 132 to 152, 160 to 180, 200 to 220, 237 to 257, 264 to 284, 289 to 309, and 339 to 359; these read VMAA…VIRW, TMGG…WGDL, YVWV…VDDW, WKYL…GLTA, LIVP…FVAL, GLAI…AYVA, AGEL…FLWF, VFMG…VAVV, IVLF…MVQV, and QVVV…LSTL.

This sequence belongs to the glycosyltransferase 4 family. MraY subfamily. It depends on Mg(2+) as a cofactor.

Its subcellular location is the cell inner membrane. It carries out the reaction UDP-N-acetyl-alpha-D-muramoyl-L-alanyl-gamma-D-glutamyl-meso-2,6-diaminopimeloyl-D-alanyl-D-alanine + di-trans,octa-cis-undecaprenyl phosphate = di-trans,octa-cis-undecaprenyl diphospho-N-acetyl-alpha-D-muramoyl-L-alanyl-D-glutamyl-meso-2,6-diaminopimeloyl-D-alanyl-D-alanine + UMP. The protein operates within cell wall biogenesis; peptidoglycan biosynthesis. Its function is as follows. Catalyzes the initial step of the lipid cycle reactions in the biosynthesis of the cell wall peptidoglycan: transfers peptidoglycan precursor phospho-MurNAc-pentapeptide from UDP-MurNAc-pentapeptide onto the lipid carrier undecaprenyl phosphate, yielding undecaprenyl-pyrophosphoryl-MurNAc-pentapeptide, known as lipid I. In Aromatoleum aromaticum (strain DSM 19018 / LMG 30748 / EbN1) (Azoarcus sp. (strain EbN1)), this protein is Phospho-N-acetylmuramoyl-pentapeptide-transferase.